The following is a 197-amino-acid chain: MIGHLEGRLRHKAPDYIVIDVHGVGYIVYVPLSTFYDLPGPGDTVALNIHTHIREDAIQLYGFRTVAEKDMFLRLITVNGVGPRLAVNILSGLTPDDLHRIILQQEGFRLKSIPGVGKKIAERILLELRDKMSVKKGREAEQPAPAAESSYGDAYSALVNLGYRPAEAEKALGKAIKSLGADPPVEKLLKETLRLLA.

A domain I region spans residues 1–64; it reads MIGHLEGRLR…EDAIQLYGFR (64 aa). The segment at 65 to 143 is domain II; the sequence is TVAEKDMFLR…VKKGREAEQP (79 aa). The tract at residues 144 to 145 is flexible linker; it reads AP. Positions 146-197 are domain III; it reads AAESSYGDAYSALVNLGYRPAEAEKALGKAIKSLGADPPVEKLLKETLRLLA.

This sequence belongs to the RuvA family. Homotetramer. Forms an RuvA(8)-RuvB(12)-Holliday junction (HJ) complex. HJ DNA is sandwiched between 2 RuvA tetramers; dsDNA enters through RuvA and exits via RuvB. An RuvB hexamer assembles on each DNA strand where it exits the tetramer. Each RuvB hexamer is contacted by two RuvA subunits (via domain III) on 2 adjacent RuvB subunits; this complex drives branch migration. In the full resolvosome a probable DNA-RuvA(4)-RuvB(12)-RuvC(2) complex forms which resolves the HJ.

It is found in the cytoplasm. The RuvA-RuvB-RuvC complex processes Holliday junction (HJ) DNA during genetic recombination and DNA repair, while the RuvA-RuvB complex plays an important role in the rescue of blocked DNA replication forks via replication fork reversal (RFR). RuvA specifically binds to HJ cruciform DNA, conferring on it an open structure. The RuvB hexamer acts as an ATP-dependent pump, pulling dsDNA into and through the RuvAB complex. HJ branch migration allows RuvC to scan DNA until it finds its consensus sequence, where it cleaves and resolves the cruciform DNA. The protein is Holliday junction branch migration complex subunit RuvA of Syntrophobacter fumaroxidans (strain DSM 10017 / MPOB).